The primary structure comprises 234 residues: Ribosomal RNA large subunit methyltransferase E (234 aa).

Positions methionine 1–serine 37 are disordered. 5 residues coordinate S-adenosyl-L-methionine: glycine 91, tryptophan 93, aspartate 109, aspartate 125, and aspartate 149. Lysine 189 acts as the Proton acceptor in catalysis.

Belongs to the class I-like SAM-binding methyltransferase superfamily. RNA methyltransferase RlmE family.

The protein resides in the cytoplasm. The enzyme catalyses uridine(2552) in 23S rRNA + S-adenosyl-L-methionine = 2'-O-methyluridine(2552) in 23S rRNA + S-adenosyl-L-homocysteine + H(+). Specifically methylates the uridine in position 2552 of 23S rRNA at the 2'-O position of the ribose in the fully assembled 50S ribosomal subunit. In Hyphomonas neptunium (strain ATCC 15444), this protein is Ribosomal RNA large subunit methyltransferase E.